The following is a 664-amino-acid chain: Glycine--tRNA ligase beta subunit (664 aa).

It belongs to the class-II aminoacyl-tRNA synthetase family. As to quaternary structure, tetramer of two alpha and two beta subunits.

The protein resides in the cytoplasm. The catalysed reaction is tRNA(Gly) + glycine + ATP = glycyl-tRNA(Gly) + AMP + diphosphate. The chain is Glycine--tRNA ligase beta subunit (glyS) from Aquifex aeolicus (strain VF5).